We begin with the raw amino-acid sequence, 283 residues long: Protein/nucleic acid deglycase HchA (283 aa).

Zn(2+) contacts are provided by histidine 86, glutamate 91, and histidine 123. The active-site Nucleophile is cysteine 185.

This sequence belongs to the peptidase C56 family. HchA subfamily. Homodimer.

The protein resides in the cytoplasm. The enzyme catalyses N(omega)-(1-hydroxy-2-oxopropyl)-L-arginyl-[protein] + H2O = lactate + L-arginyl-[protein] + H(+). It catalyses the reaction N(6)-(1-hydroxy-2-oxopropyl)-L-lysyl-[protein] + H2O = lactate + L-lysyl-[protein] + H(+). It carries out the reaction S-(1-hydroxy-2-oxopropyl)-L-cysteinyl-[protein] + H2O = lactate + L-cysteinyl-[protein] + H(+). The catalysed reaction is N(omega)-(1-hydroxy-2-oxoethyl)-L-arginyl-[protein] + H2O = L-arginyl-[protein] + glycolate + H(+). The enzyme catalyses N(6)-(1-hydroxy-2-oxoethyl)-L-lysyl-[protein] + H2O = glycolate + L-lysyl-[protein] + H(+). It catalyses the reaction S-(1-hydroxy-2-oxoethyl)-L-cysteinyl-[protein] + H2O = glycolate + L-cysteinyl-[protein] + H(+). It carries out the reaction N(2)-(1-hydroxy-2-oxopropyl)-dGTP + H2O = lactate + dGTP + H(+). The catalysed reaction is N(2)-(1-hydroxy-2-oxopropyl)-GTP + H2O = lactate + GTP + H(+). The enzyme catalyses N(2)-(1-hydroxy-2-oxopropyl)-GDP + H2O = lactate + GDP + H(+). It catalyses the reaction N(2)-(1-hydroxy-2-oxopropyl)-GMP + H2O = lactate + GMP + H(+). It carries out the reaction N(2)-(1-hydroxy-2-oxoethyl)-dGTP + H2O = dGTP + glycolate + H(+). The catalysed reaction is N(2)-(1-hydroxy-2-oxoethyl)-GTP + H2O = glycolate + GTP + H(+). The enzyme catalyses N(2)-(1-hydroxy-2-oxoethyl)-GDP + H2O = glycolate + GDP + H(+). It catalyses the reaction N(2)-(1-hydroxy-2-oxoethyl)-GMP + H2O = glycolate + GMP + H(+). It carries out the reaction an N(2)-(1-hydroxy-2-oxopropyl)-guanosine in RNA + H2O = a guanosine in RNA + lactate + H(+). The catalysed reaction is an N(2)-(1-hydroxy-2-oxopropyl)-2'-deoxyguanosine in DNA + H2O = a 2'-deoxyguanosine in DNA + lactate + H(+). The enzyme catalyses an N(2)-(1-hydroxy-2-oxoethyl)-guanosine in RNA + H2O = a guanosine in RNA + glycolate + H(+). It catalyses the reaction an N(2)-(1-hydroxy-2-oxoethyl)-2'-deoxyguanosine in DNA + H2O = a 2'-deoxyguanosine in DNA + glycolate + H(+). Its function is as follows. Protein and nucleotide deglycase that catalyzes the deglycation of the Maillard adducts formed between amino groups of proteins or nucleotides and reactive carbonyl groups of glyoxals. Thus, functions as a protein deglycase that repairs methylglyoxal- and glyoxal-glycated proteins, and releases repaired proteins and lactate or glycolate, respectively. Deglycates cysteine, arginine and lysine residues in proteins, and thus reactivates these proteins by reversing glycation by glyoxals. Acts on early glycation intermediates (hemithioacetals and aminocarbinols), preventing the formation of Schiff bases and advanced glycation endproducts (AGE). Also functions as a nucleotide deglycase able to repair glycated guanine in the free nucleotide pool (GTP, GDP, GMP, dGTP) and in DNA and RNA. Is thus involved in a major nucleotide repair system named guanine glycation repair (GG repair), dedicated to reversing methylglyoxal and glyoxal damage via nucleotide sanitization and direct nucleic acid repair. Plays an important role in protecting cells from carbonyl stress. The polypeptide is Protein/nucleic acid deglycase HchA (Escherichia coli (strain K12 / MC4100 / BW2952)).